A 103-amino-acid chain; its full sequence is Integration host factor subunit alpha (103 aa).

It belongs to the bacterial histone-like protein family. In terms of assembly, heterodimer of an alpha and a beta chain.

Its function is as follows. This protein is one of the two subunits of integration host factor, a specific DNA-binding protein that functions in genetic recombination as well as in transcriptional and translational control. This is Integration host factor subunit alpha from Aromatoleum aromaticum (strain DSM 19018 / LMG 30748 / EbN1) (Azoarcus sp. (strain EbN1)).